Reading from the N-terminus, the 95-residue chain is Aspartyl/glutamyl-tRNA(Asn/Gln) amidotransferase subunit C (95 aa).

Belongs to the GatC family. As to quaternary structure, heterotrimer of A, B and C subunits.

It carries out the reaction L-glutamyl-tRNA(Gln) + L-glutamine + ATP + H2O = L-glutaminyl-tRNA(Gln) + L-glutamate + ADP + phosphate + H(+). The catalysed reaction is L-aspartyl-tRNA(Asn) + L-glutamine + ATP + H2O = L-asparaginyl-tRNA(Asn) + L-glutamate + ADP + phosphate + 2 H(+). Its function is as follows. Allows the formation of correctly charged Asn-tRNA(Asn) or Gln-tRNA(Gln) through the transamidation of misacylated Asp-tRNA(Asn) or Glu-tRNA(Gln) in organisms which lack either or both of asparaginyl-tRNA or glutaminyl-tRNA synthetases. The reaction takes place in the presence of glutamine and ATP through an activated phospho-Asp-tRNA(Asn) or phospho-Glu-tRNA(Gln). The polypeptide is Aspartyl/glutamyl-tRNA(Asn/Gln) amidotransferase subunit C (Chlorobium phaeobacteroides (strain DSM 266 / SMG 266 / 2430)).